A 441-amino-acid polypeptide reads, in one-letter code: Nucleolar and spindle-associated protein 1 (441 aa).

2 disordered regions span residues 47–186 and 216–267; these read ARKG…PNFK and MNEL…LGLK. 2 stretches are compositionally biased toward polar residues: residues 56–74 and 100–116; these read ESQT…ISNQ and DSQQ…PTEF. The span at 117-126 shows a compositional bias: basic and acidic residues; sequence QNHEKQESQD. Phosphoserine; by ATM is present on Ser-124. Ser-135 is subject to Phosphoserine. Positions 152-171 are enriched in basic and acidic residues; that stretch reads RDSKVPSEGKKSLYTDESSK. Residue Thr-182 is modified to Phosphothreonine. Positions 237–382 are interaction with microtubules; it reads GRLSVASTPI…HKGKLKPWGQ (146 aa). At Ser-240 the chain carries Phosphoserine. Polar residues predominate over residues 241 to 264; it reads VASTPISQRRSQGRSCGPASQSTL. Thr-244 bears the Phosphothreonine mark. 5 positions are modified to phosphoserine: Ser-247, Ser-255, Ser-269, Ser-276, and Ser-311. The tract at residues 286 to 319 is disordered; the sequence is AATKDNEHKRSLTKTPARKSAHVTVSGGTPKGEA. 3 positions are modified to phosphothreonine: Thr-314, Thr-338, and Thr-349. Phosphoserine is present on residues Ser-352 and Ser-363. A KEN box motif is present at residues 384 to 390; sequence KENNYLN. A disordered region spans residues 401 to 427; sequence KTYKQPHLQTKEEQRKKREQERKEKKA. Residues 407–432 are a coiled coil; the sequence is HLQTKEEQRKKREQERKEKKAKVLGM. A compositionally biased stretch (basic and acidic residues) spans 409–424; the sequence is QTKEEQRKKREQERKE. Lys-411 is modified (N6-acetyllysine).

Belongs to the NUSAP family. Interacts with DNA and microtubules. Microtubule bundling is inhibited by IPO7, KPNA2 and KPNB1 while association with DNA is also inhibited by IPO7 and KPNA2. Ubiquitinated. Ubiquitination by FZR1 may lead to proteasome-dependent degradation of this protein. In terms of processing, phosphorylation by ATM in G2/M-phase induces mitotic arrest.

It localises to the cytoplasm. The protein resides in the nucleus. The protein localises to the nucleolus. Its subcellular location is the cytoskeleton. It is found in the spindle. It localises to the chromosome. Microtubule-associated protein with the capacity to bundle and stabilize microtubules. May associate with chromosomes and promote the organization of mitotic spindle microtubules around them. The protein is Nucleolar and spindle-associated protein 1 (NUSAP1) of Homo sapiens (Human).